Reading from the N-terminus, the 116-residue chain is Large ribosomal subunit protein bL17 (116 aa).

This sequence belongs to the bacterial ribosomal protein bL17 family. Part of the 50S ribosomal subunit. Contacts proteins L3 and L32.

Binds to the 23S rRNA. This Deinococcus radiodurans (strain ATCC 13939 / DSM 20539 / JCM 16871 / CCUG 27074 / LMG 4051 / NBRC 15346 / NCIMB 9279 / VKM B-1422 / R1) protein is Large ribosomal subunit protein bL17.